Consider the following 1356-residue polypeptide: Collagen alpha-2(I) chain (1356 aa).

Positions Met1–Cys22 are cleaved as a signal peptide. Positions Cys22 to Arg1112 are disordered. Pyrrolidone carboxylic acid is present on residues Gln23 and Gln73. Residues Gln23 to Ala72 constitute a propeptide, N-terminal propeptide. Residues Gly76–Gly88 show a composition bias toward gly residues. Lys78 is subject to Allysine. Lys171 carries the post-translational modification 5-hydroxylysine; alternate. An O-linked (Gal...) hydroxylysine; alternate glycan is attached at Lys171. The span at Ala219–Pro248 shows a compositional bias: low complexity. The span at Gly259–Gly280 shows a compositional bias: gly residues. The span at Ile281–Pro315 shows a compositional bias: low complexity. Pro residues predominate over residues Phe317 to Gln327. Gly residues-rich tracts occupy residues Gly334–Gly343, Gly391–Gly412, Gly418–Gly427, and Gly448–Gly457. The span at Pro479–Pro489 shows a compositional bias: low complexity. Residues Gly511–Gly520 show a composition bias toward gly residues. 2 stretches are compositionally biased toward low complexity: residues Asn521–Ala564 and Asn587–Arg603. Composition is skewed to gly residues over residues Gly610–Gly619 and Gly628–Gly646. Positions Lys648–Leu659 are enriched in basic and acidic residues. A compositionally biased stretch (low complexity) spans Leu716–Pro731. Residues Gly736 to Gly745 show a composition bias toward gly residues. Low complexity-rich tracts occupy residues Pro746–Pro764 and Pro776–Ala786. Residues Gly787–Gly796 show a composition bias toward gly residues. Residues Ile797 to Lys809 are compositionally biased toward low complexity. The segment covering Gly817–Gly826 has biased composition (gly residues). The span at Glu827–Gln858 shows a compositional bias: low complexity. The segment covering Gly877–Gly886 has biased composition (gly residues). A compositionally biased stretch (low complexity) spans Pro888–Ala903. The segment covering Gly976–Gly985 has biased composition (gly residues). Residues Arg999–Met1013 are compositionally biased toward basic and acidic residues. Pro residues predominate over residues Ala1083–Ala1095. Positions Asp1114–Lys1356 are cleaved as a propeptide — C-terminal propeptide. One can recognise a Fibrillar collagen NC1 domain in the interval Tyr1123 to Lys1356. Cystine bridges form between Cys1153/Cys1185, Cys1193/Cys1354, and Cys1262/Cys1307. Residues Asp1171, Asn1173, Gln1174, Cys1176, and Asp1179 each contribute to the Ca(2+) site. The N-linked (GlcNAc...) asparagine glycan is linked to Asn1257.

This sequence belongs to the fibrillar collagen family. Trimers of one alpha 2(I) and two alpha 1(I) chains. In terms of processing, prolines at the third position of the tripeptide repeating unit (G-X-Y) are hydroxylated in some or all of the chains. Forms the fibrils of tendon, ligaments and bones. In bones the fibrils are mineralized with calcium hydroxyapatite.

It is found in the secreted. The protein localises to the extracellular space. It localises to the extracellular matrix. Its function is as follows. Type I collagen is a member of group I collagen (fibrillar forming collagen). This is Collagen alpha-2(I) chain (col1a2) from Oncorhynchus mykiss (Rainbow trout).